A 1123-amino-acid chain; its full sequence is Ubiquitin carboxyl-terminal hydrolase 43 (1123 aa).

Residues 1–102 (MDLGPGDAAG…DGARPPGAQG (102 aa)) are disordered. The segment covering 17 to 28 (RPRRRRSLRRLF) has biased composition (basic residues). Residues 29-39 (SRFLLALGSRS) are compositionally biased toward low complexity. The 610-residue stretch at 101-710 (QGLKNHGNTC…GAYILFYQKR (610 aa)) folds into the USP domain. Residue Cys110 is the Nucleophile of the active site. The tract at residues 202–221 (EGSSRGPVSEKLPPEATKTS) is disordered. The Proton acceptor role is filled by His668. An Asymmetric dimethylarginine modification is found at Arg746. 4 disordered regions span residues 795–826 (ISMK…EKPP), 854–886 (TGTA…IERG), 959–1049 (FQMG…RIPE), and 1068–1099 (SSLR…QASY). The residue at position 969 (Ser969) is a Phosphoserine. The segment covering 979–990 (KDSRRGTSELDR) has biased composition (basic and acidic residues). Over residues 1016–1027 (VSPQVPPVSLVS) the composition is skewed to low complexity. Ser1041 is subject to Phosphoserine.

This sequence belongs to the peptidase C19 family. In terms of tissue distribution, expressed in brain, aorta and lung at low levels.

It catalyses the reaction Thiol-dependent hydrolysis of ester, thioester, amide, peptide and isopeptide bonds formed by the C-terminal Gly of ubiquitin (a 76-residue protein attached to proteins as an intracellular targeting signal).. Functionally, may recognize and hydrolyze the peptide bond at the C-terminal Gly of ubiquitin. Involved in the processing of poly-ubiquitin precursors as well as that of ubiquitinated proteins. In Homo sapiens (Human), this protein is Ubiquitin carboxyl-terminal hydrolase 43 (USP43).